A 199-amino-acid polypeptide reads, in one-letter code: Probable thymidylate kinase (199 aa).

Position 9–16 (9–16 (GIDGCGKT)) interacts with ATP.

This sequence belongs to the thymidylate kinase family.

The enzyme catalyses dTMP + ATP = dTDP + ADP. The protein is Probable thymidylate kinase of Methanococcus maripaludis (strain C6 / ATCC BAA-1332).